The sequence spans 516 residues: Methionine--tRNA ligase (516 aa).

A 'HIGH' region motif is present at residues 14-24 (SYPNGKPHIGH). Residues 302 to 306 (KMSKS) carry the 'KMSKS' region motif. Residue K305 participates in ATP binding.

It belongs to the class-I aminoacyl-tRNA synthetase family. MetG type 2B subfamily. As to quaternary structure, monomer.

Its subcellular location is the cytoplasm. The catalysed reaction is tRNA(Met) + L-methionine + ATP = L-methionyl-tRNA(Met) + AMP + diphosphate. Is required not only for elongation of protein synthesis but also for the initiation of all mRNA translation through initiator tRNA(fMet) aminoacylation. The chain is Methionine--tRNA ligase from Rhizobium meliloti (strain 1021) (Ensifer meliloti).